The chain runs to 984 residues: MORC family CW-type zinc finger protein 1 (984 aa).

Positions 284–353 form a coiled coil; it reads AFKDEVKKAE…RELKTARTLS (70 aa). A CW-type zinc finger spans residues 477-531; sequence AMGIPFIIQCDLCLKWRVLPSSTNYQEKEFFDIWICANNPNRLENSCHQVECLPS. The Zn(2+) site is built by cysteine 486, cysteine 489, cysteine 512, and cysteine 523. Coiled-coil stretches lie at residues 737–761 and 900–934; these read DVSL…CNDV and EISL…LQLG.

It is found in the nucleus. In terms of biological role, required for spermatogenesis. Essential for de novo DNA methylation and silencing of transposable elements in the male embryonic germ cells. This Homo sapiens (Human) protein is MORC family CW-type zinc finger protein 1.